A 376-amino-acid chain; its full sequence is UDP-N-acetylglucosamine--N-acetylmuramyl-(pentapeptide) pyrophosphoryl-undecaprenol N-acetylglucosamine transferase (376 aa).

Residues 11–13 (TGG), asparagine 117, arginine 160, serine 208, and glutamine 310 contribute to the UDP-N-acetyl-alpha-D-glucosamine site.

This sequence belongs to the glycosyltransferase 28 family. MurG subfamily.

The protein localises to the cell inner membrane. The enzyme catalyses di-trans,octa-cis-undecaprenyl diphospho-N-acetyl-alpha-D-muramoyl-L-alanyl-D-glutamyl-meso-2,6-diaminopimeloyl-D-alanyl-D-alanine + UDP-N-acetyl-alpha-D-glucosamine = di-trans,octa-cis-undecaprenyl diphospho-[N-acetyl-alpha-D-glucosaminyl-(1-&gt;4)]-N-acetyl-alpha-D-muramoyl-L-alanyl-D-glutamyl-meso-2,6-diaminopimeloyl-D-alanyl-D-alanine + UDP + H(+). The protein operates within cell wall biogenesis; peptidoglycan biosynthesis. Functionally, cell wall formation. Catalyzes the transfer of a GlcNAc subunit on undecaprenyl-pyrophosphoryl-MurNAc-pentapeptide (lipid intermediate I) to form undecaprenyl-pyrophosphoryl-MurNAc-(pentapeptide)GlcNAc (lipid intermediate II). The chain is UDP-N-acetylglucosamine--N-acetylmuramyl-(pentapeptide) pyrophosphoryl-undecaprenol N-acetylglucosamine transferase from Rickettsia conorii (strain ATCC VR-613 / Malish 7).